Here is a 299-residue protein sequence, read N- to C-terminus: NAD-dependent protein deacetylase 1 (299 aa).

A Deacetylase sirtuin-type domain is found at 15-292; sequence LPPGTTDLAP…TTVADRLGLR (278 aa). NAD(+) contacts are provided by residues 39-59 and 117-120; these read GAGI…GSLS and QNVD. The Proton acceptor role is filled by His135. Zn(2+)-binding residues include Cys143, Cys146, Cys194, and Cys197. NAD(+)-binding positions include 234 to 236 and Leu278; that span reads GSS.

This sequence belongs to the sirtuin family. Class II subfamily. The cofactor is Zn(2+).

The protein localises to the cytoplasm. It catalyses the reaction N(6)-acetyl-L-lysyl-[protein] + NAD(+) + H2O = 2''-O-acetyl-ADP-D-ribose + nicotinamide + L-lysyl-[protein]. NAD-dependent protein deacetylase which modulates the activities of several enzymes which are inactive in their acetylated form. The polypeptide is NAD-dependent protein deacetylase 1 (Streptomyces coelicolor (strain ATCC BAA-471 / A3(2) / M145)).